A 123-amino-acid polypeptide reads, in one-letter code: Defensin beta 118 (123 aa).

A signal peptide spans 1–19 (MKLLLLALPMLVLLPQVIP). 3 disulfide bridges follow: Cys-27–Cys-54, Cys-34–Cys-48, and Cys-38–Cys-55. Disordered stretches follow at residues 59 to 79 (NEDH…STPG) and 102 to 123 (MVEE…HHSS). Residues 64-123 (QVPTTSPTPLSDSTPGSIDDILTVRFTTDYFEVSSKKDMVEESEAGWGTQTSLPDVHHSS) constitute a propeptide that is removed on maturation. Residues 66 to 79 (PTTSPTPLSDSTPG) are compositionally biased toward low complexity.

It belongs to the beta-defensin family. In terms of processing, the three-dimensional structure formed by the three intramolecular disulfide bridges is indispensable for antimicrobial activity.

It localises to the secreted. Its function is as follows. Host defense peptide that exhibits antimicrobial activity against both Gram-negative bacteria, such as E.coli and S.typhimurium, and Gram-positive bacteria, such as S.aureus and B.subtilis. Inhibits cell adhesion of E.coli on intestinal epithelial enterocytes. Causes rapid permeabilization of both the outer and inner membrane of E.coli, leading to morphological alterations on the bacterial surface. Binds to bacterial lipopolysaccharides (LPS) with high affinity, and may thereby be involved in immunoregulation through LPS neutralization. May contribute to epididymal innate immunity and protect the sperm against attack by microorganisms. The sequence is that of Defensin beta 118 (DEFB118) from Hylobates lar (Lar gibbon).